The sequence spans 180 residues: Large ribosomal subunit protein uL16 (180 aa).

This sequence belongs to the universal ribosomal protein uL16 family.

The chain is Large ribosomal subunit protein uL16 from Pyrobaculum aerophilum (strain ATCC 51768 / DSM 7523 / JCM 9630 / CIP 104966 / NBRC 100827 / IM2).